The primary structure comprises 339 residues: Heat-inducible transcription repressor HrcA (339 aa).

This sequence belongs to the HrcA family.

Negative regulator of class I heat shock genes (grpE-dnaK-dnaJ and groELS operons). Prevents heat-shock induction of these operons. This chain is Heat-inducible transcription repressor HrcA, found in Clostridium perfringens (strain SM101 / Type A).